A 182-amino-acid chain; its full sequence is Putative manganese efflux pump MntP 1 (182 aa).

Transmembrane regions (helical) follow at residues 4–24 (LLLLSLALSMDAFAVSLGLGA), 42–62 (IFQGIMPLLGFFVGVTFIAFI), 63–83 (SAFDHYLAFGILALIGAKMIY), 103–123 (LILSIATSIDALAAGVSLHLI), 127–147 (VFLSCTIIAFTTFLLSYLGVL), and 162–182 (ILGGVILIGIGSKILLEHLFF).

It belongs to the MntP (TC 9.B.29) family.

The protein resides in the cell inner membrane. Its function is as follows. Probably functions as a manganese efflux pump. The sequence is that of Putative manganese efflux pump MntP 1 from Wolinella succinogenes (strain ATCC 29543 / DSM 1740 / CCUG 13145 / JCM 31913 / LMG 7466 / NCTC 11488 / FDC 602W) (Vibrio succinogenes).